The following is a 490-amino-acid chain: Bifunctional pantoate ligase/cytidylate kinase (490 aa).

ATP is bound at residue 1-8; sequence MGGLHQGH. Residues 1 to 253 are pantoate--beta-alanine ligase; it reads MGGLHQGHAR…CGETRLIDHV (253 aa). Residue His8 is the Proton donor of the active site. Gln35 is a (R)-pantoate binding site. Gln35 serves as a coordination point for beta-alanine. Residue 124-127 coordinates ATP; sequence GEKD. Gln130 provides a ligand contact to (R)-pantoate. Residues Val153 and 161–164 each bind ATP; that span reads ASSR. Residues 254-490 are cytidylate kinase; it reads FIMTRSPIVA…AKEIWPTPQG (237 aa).

In the N-terminal section; belongs to the pantothenate synthetase family. It in the C-terminal section; belongs to the cytidylate kinase family. Type 1 subfamily.

It localises to the cytoplasm. The enzyme catalyses (R)-pantoate + beta-alanine + ATP = (R)-pantothenate + AMP + diphosphate + H(+). It carries out the reaction CMP + ATP = CDP + ADP. The catalysed reaction is dCMP + ATP = dCDP + ADP. It functions in the pathway cofactor biosynthesis; (R)-pantothenate biosynthesis; (R)-pantothenate from (R)-pantoate and beta-alanine: step 1/1. Functionally, catalyzes the condensation of pantoate with beta-alanine in an ATP-dependent reaction via a pantoyl-adenylate intermediate. Its function is as follows. Catalyzes the transfer of a phosphate group from ATP to either CMP or dCMP to form CDP or dCDP and ADP, respectively. In Synechococcus sp. (strain WH7803), this protein is Bifunctional pantoate ligase/cytidylate kinase.